A 298-amino-acid polypeptide reads, in one-letter code: Lysozyme-like protein 1 (298 aa).

The N-terminal stretch at 1 to 16 (MLKLAFVTFLFALASA) is a signal peptide. The Ch-type lysozyme domain maps to 59-277 (YAYAVDISVP…AAASSKNTDF (219 aa)).

Belongs to the glycosyl hydrolase 25 family. As to expression, expressed in intestine, IL2 and IL6 neurons and some neurons in the head ganglia.

It localises to the cytoplasmic vesicle lumen. Involved in resistance to Gram-negative bacterium S.marcescens and to bacterium Gram-positive S.aureus infection. This chain is Lysozyme-like protein 1, found in Caenorhabditis elegans.